Here is a 184-residue protein sequence, read N- to C-terminus: Ribosome-recycling factor (184 aa).

This sequence belongs to the RRF family.

The protein localises to the cytoplasm. Functionally, responsible for the release of ribosomes from messenger RNA at the termination of protein biosynthesis. May increase the efficiency of translation by recycling ribosomes from one round of translation to another. The chain is Ribosome-recycling factor from Bifidobacterium adolescentis (strain ATCC 15703 / DSM 20083 / NCTC 11814 / E194a).